Consider the following 163-residue polypeptide: MSENPAHKDLDSLQVDEKAKSWIAEKVEEELRRLESVGAKAIPLDVKNYSVMLDEDTDTVVNRIELMTSFDFDHVQQILLSAVQPYPYDKNLMFVYLVILTPLPHPMLIPYLFAPKVVGKNLLPRADGLVENTLKRWTFINDKLKRSDTVVREFQEIEEEATK.

This is an uncharacterized protein from Schizosaccharomyces pombe (strain 972 / ATCC 24843) (Fission yeast).